A 424-amino-acid polypeptide reads, in one-letter code: Histidine--tRNA ligase (424 aa).

It belongs to the class-II aminoacyl-tRNA synthetase family. In terms of assembly, homodimer.

It localises to the cytoplasm. The enzyme catalyses tRNA(His) + L-histidine + ATP = L-histidyl-tRNA(His) + AMP + diphosphate + H(+). This chain is Histidine--tRNA ligase, found in Shewanella halifaxensis (strain HAW-EB4).